A 103-amino-acid polypeptide reads, in one-letter code: Large ribosomal subunit protein bL21 (103 aa).

This sequence belongs to the bacterial ribosomal protein bL21 family. Part of the 50S ribosomal subunit. Contacts protein L20.

Functionally, this protein binds to 23S rRNA in the presence of protein L20. This Shewanella loihica (strain ATCC BAA-1088 / PV-4) protein is Large ribosomal subunit protein bL21.